The chain runs to 142 residues: Galactose-6-phosphate isomerase subunit LacA 2 (142 aa).

This sequence belongs to the LacAB/RpiB family. In terms of assembly, heteromultimeric protein consisting of LacA and LacB.

It catalyses the reaction aldehydo-D-galactose 6-phosphate = keto-D-tagatose 6-phosphate. The protein operates within carbohydrate metabolism; D-galactose 6-phosphate degradation; D-tagatose 6-phosphate from D-galactose 6-phosphate: step 1/1. This chain is Galactose-6-phosphate isomerase subunit LacA 2, found in Streptococcus pyogenes serotype M1.